The chain runs to 115 residues: Nucleoid-associated protein Ava_2322 (115 aa).

It belongs to the YbaB/EbfC family. As to quaternary structure, homodimer.

It is found in the cytoplasm. The protein localises to the nucleoid. In terms of biological role, binds to DNA and alters its conformation. May be involved in regulation of gene expression, nucleoid organization and DNA protection. The chain is Nucleoid-associated protein Ava_2322 from Trichormus variabilis (strain ATCC 29413 / PCC 7937) (Anabaena variabilis).